Consider the following 693-residue polypeptide: Elongation factor G (693 aa).

The region spanning 8 to 282 (EKTRNIGIMA…AVLDYLPSPL (275 aa)) is the tr-type G domain. Residues 17–24 (AHVDAGKT), 81–85 (DTPGH), and 135–138 (NKMD) each bind GTP.

It belongs to the TRAFAC class translation factor GTPase superfamily. Classic translation factor GTPase family. EF-G/EF-2 subfamily.

The protein localises to the cytoplasm. In terms of biological role, catalyzes the GTP-dependent ribosomal translocation step during translation elongation. During this step, the ribosome changes from the pre-translocational (PRE) to the post-translocational (POST) state as the newly formed A-site-bound peptidyl-tRNA and P-site-bound deacylated tRNA move to the P and E sites, respectively. Catalyzes the coordinated movement of the two tRNA molecules, the mRNA and conformational changes in the ribosome. In Enterococcus faecalis (strain ATCC 700802 / V583), this protein is Elongation factor G.